Here is a 445-residue protein sequence, read N- to C-terminus: Adenylosuccinate synthetase (445 aa).

GTP contacts are provided by residues 24-30 (GDEGKGK) and 52-54 (GHT). Asp25 serves as the catalytic Proton acceptor. Residues Asp25 and Gly52 each coordinate Mg(2+). IMP-binding positions include 25 to 28 (DEGK), 50 to 53 (NAGH), Thr147, Arg161, Asn238, Thr253, and Arg317. The active-site Proton donor is His53. 313 to 319 (TTTGRRR) lines the substrate pocket. GTP-binding positions include Arg319, 345–347 (KLD), and 427–429 (GVG).

It belongs to the adenylosuccinate synthetase family. In terms of assembly, homodimer. Requires Mg(2+) as cofactor.

The protein localises to the cytoplasm. The enzyme catalyses IMP + L-aspartate + GTP = N(6)-(1,2-dicarboxyethyl)-AMP + GDP + phosphate + 2 H(+). It functions in the pathway purine metabolism; AMP biosynthesis via de novo pathway; AMP from IMP: step 1/2. Plays an important role in the de novo pathway and in the salvage pathway of purine nucleotide biosynthesis. Catalyzes the first committed step in the biosynthesis of AMP from IMP. In Malassezia globosa (strain ATCC MYA-4612 / CBS 7966) (Dandruff-associated fungus), this protein is Adenylosuccinate synthetase.